A 94-amino-acid polypeptide reads, in one-letter code: Pyrimidine/purine nucleoside phosphorylase 2 (94 aa).

This sequence belongs to the nucleoside phosphorylase PpnP family.

It carries out the reaction a purine D-ribonucleoside + phosphate = a purine nucleobase + alpha-D-ribose 1-phosphate. The enzyme catalyses adenosine + phosphate = alpha-D-ribose 1-phosphate + adenine. It catalyses the reaction cytidine + phosphate = cytosine + alpha-D-ribose 1-phosphate. The catalysed reaction is guanosine + phosphate = alpha-D-ribose 1-phosphate + guanine. It carries out the reaction inosine + phosphate = alpha-D-ribose 1-phosphate + hypoxanthine. The enzyme catalyses thymidine + phosphate = 2-deoxy-alpha-D-ribose 1-phosphate + thymine. It catalyses the reaction uridine + phosphate = alpha-D-ribose 1-phosphate + uracil. The catalysed reaction is xanthosine + phosphate = alpha-D-ribose 1-phosphate + xanthine. Catalyzes the phosphorolysis of diverse nucleosides, yielding D-ribose 1-phosphate and the respective free bases. Can use uridine, adenosine, guanosine, cytidine, thymidine, inosine and xanthosine as substrates. Also catalyzes the reverse reactions. The sequence is that of Pyrimidine/purine nucleoside phosphorylase 2 from Psychrobacter arcticus (strain DSM 17307 / VKM B-2377 / 273-4).